A 505-amino-acid polypeptide reads, in one-letter code: E3 SUMO-protein ligase PIAS4-A (505 aa).

The SAP domain occupies 12-46 (VKSFRVSDLQTLLASMGRSKSGLKQDLVGRALRLV). The LXXLL motif signature appears at 20–24 (LQTLL). Lys-35 is covalently cross-linked (Glycyl lysine isopeptide (Lys-Gly) (interchain with G-Cter in SUMO); alternate). A Glycyl lysine isopeptide (Lys-Gly) (interchain with G-Cter in SUMO2); alternate cross-link involves residue Lys-35. Residues Lys-56 and Lys-68 each participate in a glycyl lysine isopeptide (Lys-Gly) (interchain with G-Cter in SUMO2) cross-link. The 161-residue stretch at 104–264 (GIPKPAPPPA…SVAVYLVRVF (161 aa)) folds into the PINIT domain. Residues 296–381 (PESEIATTGL…LKETPEDVEE (86 aa)) form an SP-RING-type zinc finger. The Zn(2+) site is built by Cys-327, His-329, Cys-350, and Cys-353. A required for nuclear localization region spans residues 374–505 (ETPEDVEEIE…DYDKDLVTAY (132 aa)). The segment covering 395–407 (DDKEKERERENSR) has biased composition (basic and acidic residues). The disordered stretch occupies residues 395 to 505 (DDKEKERERE…DYDKDLVTAY (111 aa)). Gly residues predominate over residues 437 to 457 (SGSGGASAGTGSTSGGSGGGT). Residues 462-485 (TLDDSSEEEGGGGAEDSEETDDSQ) show a composition bias toward acidic residues. Positions 493–505 (GRYDYDKDLVTAY) are enriched in basic and acidic residues.

It belongs to the PIAS family. In terms of processing, sumoylated. Lys-35 is the main site of sumoylation. In terms of tissue distribution, highly expressed in spleen, liver, and brain. Expressed at lower levels in heart, intestine, kidney, gill, skin, and muscle.

It localises to the nucleus. It carries out the reaction S-ubiquitinyl-[E2 ubiquitin-conjugating enzyme]-L-cysteine + [acceptor protein]-L-lysine = [E2 ubiquitin-conjugating enzyme]-L-cysteine + N(6)-ubiquitinyl-[acceptor protein]-L-lysine.. It functions in the pathway protein modification; protein sumoylation. In terms of biological role, functions as an E3-type small ubiquitin-like modifier (SUMO) ligase. May play a role as a transcriptional coregulator in various cellular pathways. Catalyzes conjugation of SUMO2 to KAT5 in response to DNA damage, facilitating repair of DNA double-strand breaks (DSBs) via homologous recombination (HR). Mediates sumoylation of PARP1 in response to PARP1 trapping to chromatin. Negatively regulates induction of interferon phi 1 (ifnphi1) mediated by mavs and ticam1/trif. Also inhibits ifnphi1-mediated activation of the interferon-stimulated genes (ISGs) pkz and cd40, and to a lesser extent rsad2 and isg15. May inhibit ticam1/trif-mediated activation of NF-kappa-B. The protein is E3 SUMO-protein ligase PIAS4-A of Danio rerio (Zebrafish).